A 146-amino-acid chain; its full sequence is Hemoglobin subunit beta (146 aa).

Val-1 carries the post-translational modification N-acetylvaline. Residues 2-146 (ELTAEEKAAV…VANALAHKYH (145 aa)) form the Globin domain. The residue at position 44 (Ser-44) is a Phosphoserine. Lys-59 is subject to N6-acetyllysine. Residue His-63 coordinates heme b. At Lys-82 the chain carries N6-acetyllysine. His-92 is a heme b binding site. Cys-93 carries the S-nitrosocysteine modification. Lys-144 carries the post-translational modification N6-acetyllysine.

The protein belongs to the globin family. Heterotetramer of two alpha chains and two beta chains. As to expression, red blood cells.

In terms of biological role, involved in oxygen transport from the lung to the various peripheral tissues. The sequence is that of Hemoglobin subunit beta (HBB) from Ceratotherium simum (White rhinoceros).